A 292-amino-acid polypeptide reads, in one-letter code: Transcription factor HFR1 (292 aa).

The segment at lysine 114–lysine 153 is disordered. The segment at proline 134 to aspartate 147 is basic motif; degenerate. One can recognise a bHLH domain in the interval proline 134–leucine 183. Residues lysine 139 to lysine 153 show a composition bias toward basic residues. A Nuclear localization signal motif is present at residues serine 141 to glutamate 148. The segment at glutamate 148 to leucine 183 is helix-loop-helix motif.

As to quaternary structure, binds to FHY1 and FHL. Forms PHYA/FHY1/HFR1 complex. Homodimer and heterodimer with PIF3. Do not interact alone with either phytochrome A (phyA) or B (phyB), but REP1/PIF3 complex binds to phyA and phyB, preferentially to the Pfr forms. Forms non-functional heterodimer with PRE6, causing liberation of PIF4 from the transcriptionally inactive complex HFR1-PIF4. Repressed when bound to PRE1, PRE2 and PRE4. In terms of tissue distribution, mainly expressed in fruits and flowers and, to a lower extent, in leaves, stems, seedlings and roots.

The protein resides in the nucleus. Atypical bHLH transcription factor that regulates photomorphogenesis through modulation of phytochrome (e.g. PHYA) and cryptochrome signalings. Suppresses the transcriptional regulation activity of PIF4 by forming non-DNA-binding heterodimer. This chain is Transcription factor HFR1, found in Arabidopsis thaliana (Mouse-ear cress).